Reading from the N-terminus, the 197-residue chain is Adenylate kinase isoenzyme 6 homolog FAP7 (197 aa).

ATP contacts are provided by Gly17, Gly19, Lys20, Ser21, and Ser22. The NMPbind stretch occupies residues Asn38 to Val61. Residues Ala113–Glu123 form an LID region. Arg114 contacts ATP. The disordered stretch occupies residues Pro176–Glu197. Residue Tyr183 is modified to Phosphotyrosine. Ser188 and Ser196 each carry phosphoserine.

The protein belongs to the adenylate kinase family. AK6 subfamily. As to quaternary structure, interacts with small ribosomal subunit protein uS11B/RPS14B. Not a structural component of 43S pre-ribosomes, but transiently interacts with them by binding to uS11/RPS14.

Its subcellular location is the cytoplasm. The protein localises to the nucleus. The catalysed reaction is AMP + ATP = 2 ADP. The enzyme catalyses ATP + H2O = ADP + phosphate + H(+). Broad-specificity nucleoside monophosphate (NMP) kinase that catalyzes the reversible transfer of the terminal phosphate group between nucleoside triphosphates and monophosphates. Also has ATPase activity. Involved in the late cytoplasmic maturation steps of the 40S ribosomal particles, specifically 18S rRNA maturation. Required for cleavage of the 20S pre-rRNA at site D in the cytoplasm. While NMP activity is not required for ribosome maturation, ATPase activity is. Associates transiently with small ribosomal subunit protein uS11. ATP hydrolysis breaks the interaction with uS11. May temporarily remove uS11 from the ribosome to enable a conformational change of the ribosomal RNA that is needed for the final maturation step of the small ribosomal subunit. Promotes formation of the rotated state in 80S-like ribosomes, a key intermediate in translocation, thereby releasing the essential assembly factor DIM1 from pre-40S subunits. Its NMP activity may have a role in nuclear energy homeostasis. Involved in oxidative stress response. Required for POS9-dependent target gene transcription upon oxidative stress. The polypeptide is Adenylate kinase isoenzyme 6 homolog FAP7 (Saccharomyces cerevisiae (strain ATCC 204508 / S288c) (Baker's yeast)).